The sequence spans 84 residues: Small ribosomal subunit protein uS17 (84 aa).

Belongs to the universal ribosomal protein uS17 family. In terms of assembly, part of the 30S ribosomal subunit.

Functionally, one of the primary rRNA binding proteins, it binds specifically to the 5'-end of 16S ribosomal RNA. The sequence is that of Small ribosomal subunit protein uS17 from Thermoanaerobacter pseudethanolicus (strain ATCC 33223 / 39E) (Clostridium thermohydrosulfuricum).